A 401-amino-acid polypeptide reads, in one-letter code: MASAISLSLLNGATPLKSNSLHKSRLTPLHLRTISCSRLSYSPSSREISLKTQSTVPISCRRSRFDFVPRCGISSNDLPTEKKKSFGEWVEFVGEAVSTAFPIWVSLGCLLGLMRPSTFNWVTPNWTIVGLTITMLGMGMTLTLDDLRGALSMPKELFAGFLLQYSVMPLSAFFVSKLLNLPPHYAAGLILVGCCPGGTASNIVTYIARGNVALSVLMTAASTVSAVIMTPLLTAKLAKQYITVDALGLLMSTLQVVLLPVLAGAFLNQYFKKLVKFVSPVMPPIAVGTVAILCGYAIGQNASAILMSGKQVVLASCLLHISGFLFGYLFSRILGIDVASSRTISIEVGMQNSVLGVVLATQHFGNPLTAVPCAVSSVCHSILGSVLAGIWRRSAPKQLED.

The transit peptide at 1–70 (MASAISLSLL…RRSRFDFVPR (70 aa)) directs the protein to the chloroplast. Transmembrane regions (helical) follow at residues 92–112 (FVGE…CLLG), 122–142 (VTPN…GMTL), 156–176 (ELFA…FFVS), 187–207 (AGLI…VTYI), 212–232 (VALS…MTPL), 247–267 (LGLL…GAFL), 278–298 (VSPV…GYAI), 311–331 (QVVL…YLFS), and 371–391 (VPCA…AGIW).

It belongs to the bile acid:sodium symporter (BASS) (TC 2.A.28) family.

Its subcellular location is the membrane. The protein localises to the plastid. The protein resides in the chloroplast envelope. In terms of biological role, may function as sodium-coupled metabolite transporter across the chloroplast envelope. The chain is Probable sodium/metabolite cotransporter BASS1, chloroplastic (BASS1) from Arabidopsis thaliana (Mouse-ear cress).